The primary structure comprises 997 residues: Sarcoplasmic/endoplasmic reticulum calcium ATPase 2 (997 aa).

Residues 1 to 48 lie on the Cytoplasmic side of the membrane; that stretch reads MENAHTKTVEEVLGYFGVNESTGLSLEQVKKLKERWGSNELPAEEGKT. Serine 38 is subject to Phosphoserine. Residues 49–69 traverse the membrane as a helical segment; it reads LLELVIEQFEDLLVRILLLAA. Topologically, residues 70 to 89 are lumenal; sequence CISFVLAWFEEGEETITAFV. The helical transmembrane segment at 90-110 threads the bilayer; it reads EPFVILLILVANAIVGVWQER. Topologically, residues 111–253 are cytoplasmic; the sequence is NAENAIEALK…QERTPLQQKL (143 aa). A helical transmembrane segment spans residues 254-273; the sequence is DEFGEQLSKVISLICIAVWI. Residues 274 to 295 are Lumenal-facing; it reads INIGHFNDPVHGGSWIRGAIYY. Tyrosine 294 and tyrosine 295 each carry 3'-nitrotyrosine. A helical membrane pass occupies residues 296 to 313; sequence FKIAVALAVAAIPEGLPA. Valine 304, alanine 305, isoleucine 307, and glutamate 309 together coordinate Ca(2+). At 314–756 the chain is on the cytoplasmic side; it reads VITTCLALGT…EEGRAIYNNM (443 aa). Residue aspartate 351 is the 4-aspartylphosphate intermediate of the active site. The Mg(2+) site is built by aspartate 351 and threonine 353. Threonine 353 is an ATP binding site. Threonine 441 carries the post-translational modification Phosphothreonine. ATP is bound by residues glutamate 442, arginine 489, and lysine 514. Residue serine 531 is modified to Phosphoserine. Position 559 (arginine 559) interacts with ATP. The segment at 575–594 is interaction with HAX1; the sequence is MNLEDSANFIKYETNLTFVG. Serine 580 carries the phosphoserine modification. Positions 624, 625, and 626 each coordinate ATP. Phosphoserine is present on residues serine 661 and serine 663. Positions 677 and 683 each coordinate ATP. Residue aspartate 702 coordinates Mg(2+). Position 705 (asparagine 705) interacts with ATP. A helical transmembrane segment spans residues 757–776; it reads KQFIRYLISSNVGEVVCIFL. Asparagine 767 and glutamate 770 together coordinate Ca(2+). The Lumenal segment spans residues 777 to 786; sequence TAALGFPEAL. The helical transmembrane segment at 787-807 threads the bilayer; sequence IPVQLLWVNLVTDGLPATALG. Positions 787-807 are interaction with PLN; it reads IPVQLLWVNLVTDGLPATALG. Positions 788–997 are interaction with TMEM64 and PDIA3; that stretch reads PVQLLWVNLV…RNYLEPAILE (210 aa). 3 residues coordinate Ca(2+): asparagine 795, threonine 798, and aspartate 799. The Cytoplasmic segment spans residues 808-827; the sequence is FNPPDLDIMNKPPRNPKEPL. A helical transmembrane segment spans residues 828–850; the sequence is ISGWLFFRYLAIGCYVGAATVGA. Over 851 to 896 the chain is Lumenal; it reads AAWWFIAADGGPRVSFYQLSHFLQCKDDNPDFEGVDCAIFESPYPM. The cysteines at positions 875 and 887 are disulfide-linked. A helical transmembrane segment spans residues 897–916; it reads TMALSVLVTIEMCNALNSLS. Glutamate 907 is a Ca(2+) binding site. At 917–929 the chain is on the cytoplasmic side; it reads ENQSLLRMPPWEN. A helical transmembrane segment spans residues 930-948; the sequence is IWLVGSICLSMSLHFLILY. The segment at 931–942 is interaction with PLN; sequence WLVGSICLSMSL. Residues 949–963 lie on the Lumenal side of the membrane; it reads VEPLPLIFQITPLNL. Residues 964 to 984 form a helical membrane-spanning segment; it reads TQWLMVLKISLPVILMDETLK. Residues 985-997 lie on the Cytoplasmic side of the membrane; sequence FVARNYLEPAILE.

The protein belongs to the cation transport ATPase (P-type) (TC 3.A.3) family. Type IIA subfamily. In terms of assembly, interacts with sarcolipin (SLN); the interaction inhibits ATP2A2 Ca(2+) affinity. Interacts with phospholamban (PLN); the interaction inhibits ATP2A2 Ca(2+) affinity. Interacts with myoregulin (MRLN). Interacts with ARLN and ERLN; the interactions inhibit ATP2A2 Ca(2+) affinity. Interacts with STRIT1/DWORF; the interaction results in activation of ATP2A2. Interacts with the monomeric forms of SLN, PLN, ARLN, ERLN and STRI1/DWORF. Interacts with HAX1. Interacts with S100A8 and S100A9. Interacts with SLC35G1 and STIM1. Interacts with TMEM203. Interacts with TMEM64 and PDIA3. Interacts with TMX1. Interacts with TMX2. Interacts with VMP1; VMP1 competes with PLN and SLN to prevent them from forming an inhibitory complex with ATP2A2. Interacts with ULK1. Interacts with S100A1 in a Ca(2+)-dependent manner. Interacts with TUNAR. Interacts with FLVCR2; this interaction occurs in the absence of heme and promotes ATP2A2 proteasomal degradation; this complex is dissociated upon heme binding. Interacts with FNIP1. As to quaternary structure, interacts with TRAM2 (via C-terminus). It depends on Mg(2+) as a cofactor. In terms of processing, nitrated under oxidative stress. Nitration on the two tyrosine residues inhibits catalytic activity. Post-translationally, serotonylated on Gln residues by TGM2 in response to hypoxia, leading to its inactivation. As to expression, isoform 1 is expressed in the heart.

It localises to the endoplasmic reticulum membrane. Its subcellular location is the sarcoplasmic reticulum membrane. The enzyme catalyses Ca(2+)(in) + ATP + H2O = Ca(2+)(out) + ADP + phosphate + H(+). With respect to regulation, has different conformational states with differential Ca2+ affinity. The E1 conformational state (active form) shows high Ca(2+) affinity, while the E2 state exhibits low Ca(2+) affinity. Binding of ATP allosterically increases its affinity for subsequent binding of Ca2+. Reversibly inhibited by phospholamban (PLN) at low calcium concentrations. PLN inhibits ATP2A2 Ca(2+) affinity by disrupting its allosteric activation by ATP. Inhibited by sarcolipin (SLN) and myoregulin (MRLN). The inhibition is blocked by VMP1. Enhanced by STRIT1/DWORF; STRIT1 increases activity by displacing sarcolipin (SLN), phospholamban (PLN) and myoregulin (MRLN). Stabilizes SERCA2 in its E2 state. Its function is as follows. This magnesium-dependent enzyme catalyzes the hydrolysis of ATP coupled with the translocation of calcium from the cytosol to the sarcoplasmic reticulum lumen. Involved in autophagy in response to starvation. Upon interaction with VMP1 and activation, controls ER-isolation membrane contacts for autophagosome formation. Also modulates ER contacts with lipid droplets, mitochondria and endosomes. In coordination with FLVCR2 mediates heme-stimulated switching from mitochondrial ATP synthesis to thermogenesis. Involved in the regulation of the contraction/relaxation cycle. Acts as a regulator of TNFSF11-mediated Ca(2+) signaling pathways via its interaction with TMEM64 which is critical for the TNFSF11-induced CREB1 activation and mitochondrial ROS generation necessary for proper osteoclast generation. Association between TMEM64 and SERCA2 in the ER leads to cytosolic Ca(2+) spiking for activation of NFATC1 and production of mitochondrial ROS, thereby triggering Ca(2+) signaling cascades that promote osteoclast differentiation and activation. The protein is Sarcoplasmic/endoplasmic reticulum calcium ATPase 2 (ATP2A2) of Felis catus (Cat).